The sequence spans 1154 residues: DNA-directed RNA polymerase subunit beta (1154 aa).

Positions 1108-1123 are enriched in basic and acidic residues; sequence ELGIDIQGEDRSERAG. The disordered stretch occupies residues 1108-1136; that stretch reads ELGIDIQGEDRSERAGEPASPDEMDDEEE. Positions 1127–1136 are enriched in acidic residues; the sequence is SPDEMDDEEE.

It belongs to the RNA polymerase beta chain family. The RNAP catalytic core consists of 2 alpha, 1 beta, 1 beta' and 1 omega subunit. When a sigma factor is associated with the core the holoenzyme is formed, which can initiate transcription.

The catalysed reaction is RNA(n) + a ribonucleoside 5'-triphosphate = RNA(n+1) + diphosphate. In terms of biological role, DNA-dependent RNA polymerase catalyzes the transcription of DNA into RNA using the four ribonucleoside triphosphates as substrates. This chain is DNA-directed RNA polymerase subunit beta, found in Heliobacterium modesticaldum (strain ATCC 51547 / Ice1).